Reading from the N-terminus, the 232-residue chain is Ion-translocating oxidoreductase complex subunit E (232 aa).

The next 5 helical transmembrane spans lie at L39–L59, I69–A89, F92–V112, A125–L145, and P182–V202.

It belongs to the NqrDE/RnfAE family. In terms of assembly, the complex is composed of six subunits: RnfA, RnfB, RnfC, RnfD, RnfE and RnfG.

The protein localises to the cell inner membrane. Its function is as follows. Part of a membrane-bound complex that couples electron transfer with translocation of ions across the membrane. In Klebsiella pneumoniae (strain 342), this protein is Ion-translocating oxidoreductase complex subunit E.